Consider the following 266-residue polypeptide: Undecaprenyl-diphosphatase (266 aa).

The next 7 membrane-spanning stretches (helical) occupy residues 38–58 (SDMF…IIYW), 80–100 (LIVA…VLHF), 108–128 (PIAW…WAAA), 136–156 (ITWL…IFPG), 176–196 (AAAT…ASGY), 217–237 (IAFV…LAYI), and 245–265 (FAVY…TGLI).

The protein belongs to the UppP family.

The protein localises to the cell inner membrane. The catalysed reaction is di-trans,octa-cis-undecaprenyl diphosphate + H2O = di-trans,octa-cis-undecaprenyl phosphate + phosphate + H(+). Catalyzes the dephosphorylation of undecaprenyl diphosphate (UPP). Confers resistance to bacitracin. In Rhizobium leguminosarum bv. trifolii (strain WSM2304), this protein is Undecaprenyl-diphosphatase.